Here is a 245-residue protein sequence, read N- to C-terminus: NAD(P)H-quinone oxidoreductase subunit K (245 aa).

Residues Cys-58, Cys-59, Cys-123, and Cys-154 each contribute to the [4Fe-4S] cluster site.

Belongs to the complex I 20 kDa subunit family. NDH-1 can be composed of about 15 different subunits; different subcomplexes with different compositions have been identified which probably have different functions. Requires [4Fe-4S] cluster as cofactor.

The protein resides in the cellular thylakoid membrane. The catalysed reaction is a plastoquinone + NADH + (n+1) H(+)(in) = a plastoquinol + NAD(+) + n H(+)(out). The enzyme catalyses a plastoquinone + NADPH + (n+1) H(+)(in) = a plastoquinol + NADP(+) + n H(+)(out). NDH-1 shuttles electrons from an unknown electron donor, via FMN and iron-sulfur (Fe-S) centers, to quinones in the respiratory and/or the photosynthetic chain. The immediate electron acceptor for the enzyme in this species is believed to be plastoquinone. Couples the redox reaction to proton translocation, and thus conserves the redox energy in a proton gradient. Cyanobacterial NDH-1 also plays a role in inorganic carbon-concentration. The chain is NAD(P)H-quinone oxidoreductase subunit K from Trichormus variabilis (strain ATCC 29413 / PCC 7937) (Anabaena variabilis).